A 779-amino-acid polypeptide reads, in one-letter code: Phosphatidylinositol 4-phosphate 5-kinase 4 (779 aa).

Residues 20-61 (QQAKKRANSIFGTVSVAPQTDDDATTTTEENDDETSTNRSSI) are disordered. Positions 39–54 (TDDDATTTTEENDDET) are enriched in acidic residues. 8 MORN repeats span residues 77-99 (YTGQ…DGCM), 100-122 (YIGD…SGAT), 123-145 (YEGE…SGDT), 146-168 (YKGQ…NGDV), 169-191 (YDGE…DGSY), 192-214 (YMGE…DGNR), 215-237 (YDGF…DGSF), and 238-259 (YVGH…SGDD). Residues 382 to 775 (TISKGHRNYE…RFRDFIFKVF (394 aa)) enclose the PIPK domain. The activation loop stretch occupies residues 735 to 756 (YDISKKLEHAYKSIQYDPTSIS).

It carries out the reaction a 1,2-diacyl-sn-glycero-3-phospho-(1D-myo-inositol 4-phosphate) + ATP = a 1,2-diacyl-sn-glycero-3-phospho-(1D-myo-inositol-4,5-bisphosphate) + ADP + H(+). In Arabidopsis thaliana (Mouse-ear cress), this protein is Phosphatidylinositol 4-phosphate 5-kinase 4 (PIP5K4).